Consider the following 173-residue polypeptide: Large ribosomal subunit protein uL10 (173 aa).

This sequence belongs to the universal ribosomal protein uL10 family. In terms of assembly, part of the ribosomal stalk of the 50S ribosomal subunit. The N-terminus interacts with L11 and the large rRNA to form the base of the stalk. The C-terminus forms an elongated spine to which L12 dimers bind in a sequential fashion forming a multimeric L10(L12)X complex.

Forms part of the ribosomal stalk, playing a central role in the interaction of the ribosome with GTP-bound translation factors. The polypeptide is Large ribosomal subunit protein uL10 (Oleidesulfovibrio alaskensis (strain ATCC BAA-1058 / DSM 17464 / G20) (Desulfovibrio alaskensis)).